The primary structure comprises 154 residues: Myoglobin (154 aa).

Residues Gly2 to Lys148 form the Globin domain. Ser4 carries the phosphoserine modification. His65 is a nitrite binding site. His65 is an O2 binding site. Thr68 is modified (phosphothreonine). Position 94 (His94) interacts with heme b.

This sequence belongs to the globin family. In terms of assembly, monomeric.

Its subcellular location is the cytoplasm. It is found in the sarcoplasm. It carries out the reaction Fe(III)-heme b-[protein] + nitric oxide + H2O = Fe(II)-heme b-[protein] + nitrite + 2 H(+). The enzyme catalyses H2O2 + AH2 = A + 2 H2O. Functionally, monomeric heme protein which primary function is to store oxygen and facilitate its diffusion within muscle tissues. Reversibly binds oxygen through a pentacoordinated heme iron and enables its timely and efficient release as needed during periods of heightened demand. Depending on the oxidative conditions of tissues and cells, and in addition to its ability to bind oxygen, it also has a nitrite reductase activity whereby it regulates the production of bioactive nitric oxide. Under stress conditions, like hypoxia and anoxia, it also protects cells against reactive oxygen species thanks to its pseudoperoxidase activity. The chain is Myoglobin (MB) from Phocoenoides dalli dalli (Dall's porpoise).